A 224-amino-acid polypeptide reads, in one-letter code: ATP-dependent dethiobiotin synthetase BioD (224 aa).

Residue 12-17 (EVGKTV) coordinates ATP. Position 16 (T16) interacts with Mg(2+). K34 is a catalytic residue. Residue T38 participates in substrate binding. Residues D47, 106-109 (EGAG), 166-167 (GS), and 196-198 (PEG) contribute to the ATP site. Residues D47 and E106 each coordinate Mg(2+).

It belongs to the dethiobiotin synthetase family. In terms of assembly, homodimer. It depends on Mg(2+) as a cofactor.

The protein resides in the cytoplasm. The enzyme catalyses (7R,8S)-7,8-diammoniononanoate + CO2 + ATP = (4R,5S)-dethiobiotin + ADP + phosphate + 3 H(+). It participates in cofactor biosynthesis; biotin biosynthesis; biotin from 7,8-diaminononanoate: step 1/2. In terms of biological role, catalyzes a mechanistically unusual reaction, the ATP-dependent insertion of CO2 between the N7 and N8 nitrogen atoms of 7,8-diaminopelargonic acid (DAPA, also called 7,8-diammoniononanoate) to form a ureido ring. The sequence is that of ATP-dependent dethiobiotin synthetase BioD from Saccharopolyspora erythraea (strain ATCC 11635 / DSM 40517 / JCM 4748 / NBRC 13426 / NCIMB 8594 / NRRL 2338).